A 196-amino-acid polypeptide reads, in one-letter code: Deoxyribose-phosphate aldolase (196 aa).

Asp91 acts as the Proton donor/acceptor in catalysis. The active-site Schiff-base intermediate with acetaldehyde is the Lys153. Lys182 functions as the Proton donor/acceptor in the catalytic mechanism.

The protein belongs to the DeoC/FbaB aldolase family. DeoC type 1 subfamily.

The protein resides in the cytoplasm. It carries out the reaction 2-deoxy-D-ribose 5-phosphate = D-glyceraldehyde 3-phosphate + acetaldehyde. It participates in carbohydrate degradation; 2-deoxy-D-ribose 1-phosphate degradation; D-glyceraldehyde 3-phosphate and acetaldehyde from 2-deoxy-alpha-D-ribose 1-phosphate: step 2/2. Its function is as follows. Catalyzes a reversible aldol reaction between acetaldehyde and D-glyceraldehyde 3-phosphate to generate 2-deoxy-D-ribose 5-phosphate. The polypeptide is Deoxyribose-phosphate aldolase (Mycoplasma mycoides subsp. mycoides SC (strain CCUG 32753 / NCTC 10114 / PG1)).